Reading from the N-terminus, the 109-residue chain is Fluoride-specific ion channel FluC 1 (109 aa).

Helical transmembrane passes span M1 to S21, L29 to N49, E55 to N75, and V87 to I107. 2 residues coordinate Na(+): G66 and T69.

Belongs to the fluoride channel Fluc/FEX (TC 1.A.43) family.

It localises to the cell membrane. It catalyses the reaction fluoride(in) = fluoride(out). Its activity is regulated as follows. Na(+) is not transported, but it plays an essential structural role and its presence is essential for fluoride channel function. Functionally, fluoride-specific ion channel. Important for reducing fluoride concentration in the cell, thus reducing its toxicity. This Streptococcus pneumoniae serotype 4 (strain ATCC BAA-334 / TIGR4) protein is Fluoride-specific ion channel FluC 1.